Reading from the N-terminus, the 264-residue chain is Neuferricin (264 aa).

A signal peptide spans 1–22 (MLRCGGRGLLLGLAVAAAAVMA). In terms of domain architecture, Cytochrome b5 heme-binding spans 35–134 (FRLFIPEELS…KNYVCVGRVT (100 aa)).

The protein belongs to the cytochrome b5 family. MAPR subfamily.

Its subcellular location is the secreted. Functionally, heme-binding protein which promotes neuronal but not astrocyte differentiation. This chain is Neuferricin, found in Homo sapiens (Human).